A 527-amino-acid chain; its full sequence is MPQNTRHTSIVEMLSTPPQLPNSTDLNSLSEQTDKNTEANKSDTESLHKSISKSSSSSSLSTLDNTEYSNNNGNSLSTLNSQNLLSVHRQEWQHTPLSNLVEQNKLIFIRGSISVEEAFNTLVKHQLTSLPVENFPGDMNCLTFDYNDLNAYLLLVLNRIKVSNDKITSDCQNGKSVPVGEIVKLTPKNPFYKLPETENLSTVIGILGSGVHRVAITNVEMTQIKGILSQRRLIKYLWENARSFPNLKPLLDSSLEELNIGVLNAARDKPTFKQSRVISIQGDEHLIMALHKMYVERISSIAVVDPQGNLIGNISVTDVKHVTRTSQYPLLHNTCRHFVSVILNLRGLETGKDSFPIFHVYPTSSLARTFAKLVATKSHRLWIVQPNDNQPTASSEKSSSPSPSTPPVTTLPSLASSYHSNTQSSRMANSPVLKSSDTSNNKINVNINLSGPSPSQPQSPSATMPPPQSPSNCPASPTPAHFEKEYRTGKLIGVVSLTDILSVLARKQTHHKEIDPQMARKQRGHIG.

A disordered region spans residues 1–75 (MPQNTRHTSI…TEYSNNNGNS (75 aa)). Position 9 is a phosphoserine (Ser-9). The segment covering 21–31 (PNSTDLNSLSE) has biased composition (polar residues). Basic and acidic residues predominate over residues 32 to 48 (QTDKNTEANKSDTESLH). Phosphoserine is present on residues Ser-42 and Ser-46. A compositionally biased stretch (low complexity) spans 52-61 (SKSSSSSSLS). 4 consecutive CBS domains span residues 101 to 162 (VEQN…RIKV), 185 to 243 (LTPK…NARS), 272 to 330 (FKQS…QYPL), and 335 to 391 (CRHF…DNQP). The segment at 385-481 (QPNDNQPTAS…NCPASPTPAH (97 aa)) is disordered. Over residues 391 to 417 (PTASSEKSSSPSPSTPPVTTLPSLASS) the composition is skewed to low complexity. Residues 418–449 (YHSNTQSSRMANSPVLKSSDTSNNKINVNINL) show a composition bias toward polar residues. Ser-430 carries the phosphoserine modification. Residues 450 to 462 (SGPSPSQPQSPSA) show a composition bias toward low complexity.

This sequence belongs to the SDS23 family.

The protein resides in the cytoplasm. The protein localises to the nucleus. Involved in DNA replication and cell separation during budding. The chain is Protein SDS23 (SDS23) from Saccharomyces cerevisiae (strain ATCC 204508 / S288c) (Baker's yeast).